Consider the following 299-residue polypeptide: MTEHKSGFVSIIGRPNVGKSTFMNRVIGHKIAIMSDKAQTTRNKIQGVMTRNDAQIIFLDTPGIHKPKHKLGDYMMRVAKNTLSEIDAIMFMVNVNEEIGRGDEYIMEMLKNVKTPVFLVLNKIDLVHPDALMPRIEQYQKYMNFTEIVPISALEGLNVDHFIDVLKTYLPEGPKYYPDDQISDHPEQFVVSEIIREKILHLTSEEIPHAIGVNVDRMIKENDERVRVEATIYVERDSQKGIVIGKGGKKLKEVGKRARHDIEMLLGSKVYLELWVKVQKDWRNKVNFIRQMGYIEDQD.

Positions 5-172 constitute an Era-type G domain; that stretch reads KSGFVSIIGR…IDVLKTYLPE (168 aa). The G1 stretch occupies residues 13 to 20; sequence GRPNVGKS. Position 13–20 (13–20) interacts with GTP; that stretch reads GRPNVGKS. Residues 39-43 form a G2 region; the sequence is QTTRN. The tract at residues 60–63 is G3; that stretch reads DTPG. GTP contacts are provided by residues 60-64 and 122-125; these read DTPGI and NKID. Residues 122–125 are G4; sequence NKID. The segment at 151–153 is G5; that stretch reads ISA. A KH type-2 domain is found at 203–280; the sequence is TSEEIPHAIG…YLELWVKVQK (78 aa).

It belongs to the TRAFAC class TrmE-Era-EngA-EngB-Septin-like GTPase superfamily. Era GTPase family. As to quaternary structure, monomer.

The protein localises to the cytoplasm. The protein resides in the cell membrane. In terms of biological role, an essential GTPase that binds both GDP and GTP, with rapid nucleotide exchange. Plays a role in 16S rRNA processing and 30S ribosomal subunit biogenesis and possibly also in cell cycle regulation and energy metabolism. The protein is GTPase Era of Staphylococcus haemolyticus (strain JCSC1435).